The primary structure comprises 41 residues: MNDFQKYLSTAPVLLTLWMTFTAGFIIEVNRFFPDMLGLYF.

The chain crosses the membrane as a helical span at residues Y7 to I27.

This sequence belongs to the PsaJ family.

It localises to the plastid. Its subcellular location is the chloroplast thylakoid membrane. In terms of biological role, may help in the organization of the PsaE and PsaF subunits. This Thalassiosira pseudonana (Marine diatom) protein is Photosystem I reaction center subunit IX.